The chain runs to 346 residues: GTPase Obg (346 aa).

The Obg domain maps to 1–159; the sequence is MKFLDSAKIY…RTVLLRLKLI (159 aa). One can recognise an OBG-type G domain in the interval 160-327; the sequence is ADAGLVGLPN…ALRAVLAEID (168 aa). Residues 166–173, 191–195, 212–215, 279–282, and 308–310 contribute to the GTP site; these read GLPNAGKS, FTTLN, DIPG, SKVD, and SAA. Mg(2+)-binding residues include Ser-173 and Thr-193.

The protein belongs to the TRAFAC class OBG-HflX-like GTPase superfamily. OBG GTPase family. Monomer. Mg(2+) is required as a cofactor.

It localises to the cytoplasm. In terms of biological role, an essential GTPase which binds GTP, GDP and possibly (p)ppGpp with moderate affinity, with high nucleotide exchange rates and a fairly low GTP hydrolysis rate. Plays a role in control of the cell cycle, stress response, ribosome biogenesis and in those bacteria that undergo differentiation, in morphogenesis control. The polypeptide is GTPase Obg (Methylocella silvestris (strain DSM 15510 / CIP 108128 / LMG 27833 / NCIMB 13906 / BL2)).